The chain runs to 333 residues: S-adenosylmethionine decarboxylase proenzyme (333 aa).

F7 contacts substrate. Active-site residues include E8 and E11. Residue E67 coordinates substrate. Residue S68 is the Schiff-base intermediate with substrate; via pyruvic acid of the active site. A Pyruvic acid (Ser); by autocatalysis modification is found at S68. The active-site Proton donor; for catalytic activity is the C82. F223 serves as a coordination point for substrate. Catalysis depends on proton acceptor; for processing activity residues S229 and H243. Residue E247 coordinates substrate. At S298 the chain carries Phosphoserine.

The protein belongs to the eukaryotic AdoMetDC family. In terms of assembly, heterotetramer of two alpha and two beta chains. It depends on pyruvate as a cofactor. Post-translationally, is synthesized initially as an inactive proenzyme. Formation of the active enzyme involves a self-maturation process in which the active site pyruvoyl group is generated from an internal serine residue via an autocatalytic post-translational modification. Two non-identical subunits are generated from the proenzyme in this reaction, and the pyruvate is formed at the N-terminus of the alpha chain, which is derived from the carboxyl end of the proenzyme. The post-translation cleavage follows an unusual pathway, termed non-hydrolytic serinolysis, in which the side chain hydroxyl group of the serine supplies its oxygen atom to form the C-terminus of the beta chain, while the remainder of the serine residue undergoes an oxidative deamination to produce ammonia and the pyruvoyl group blocking the N-terminus of the alpha chain.

It carries out the reaction S-adenosyl-L-methionine + H(+) = S-adenosyl 3-(methylsulfanyl)propylamine + CO2. It functions in the pathway amine and polyamine biosynthesis; S-adenosylmethioninamine biosynthesis; S-adenosylmethioninamine from S-adenosyl-L-methionine: step 1/1. In terms of biological role, essential for biosynthesis of the polyamines spermidine and spermine. Promotes maintenance and self-renewal of embryonic stem cells, by maintaining spermine levels. The protein is S-adenosylmethionine decarboxylase proenzyme (Amd1) of Rattus norvegicus (Rat).